The sequence spans 258 residues: Acyl-[acyl-carrier-protein]--UDP-N-acetylglucosamine O-acyltransferase (258 aa).

It belongs to the transferase hexapeptide repeat family. LpxA subfamily. Homotrimer.

Its subcellular location is the cytoplasm. The enzyme catalyses a (3R)-hydroxyacyl-[ACP] + UDP-N-acetyl-alpha-D-glucosamine = a UDP-3-O-[(3R)-3-hydroxyacyl]-N-acetyl-alpha-D-glucosamine + holo-[ACP]. It participates in glycolipid biosynthesis; lipid IV(A) biosynthesis; lipid IV(A) from (3R)-3-hydroxytetradecanoyl-[acyl-carrier-protein] and UDP-N-acetyl-alpha-D-glucosamine: step 1/6. In terms of biological role, involved in the biosynthesis of lipid A, a phosphorylated glycolipid that anchors the lipopolysaccharide to the outer membrane of the cell. The protein is Acyl-[acyl-carrier-protein]--UDP-N-acetylglucosamine O-acyltransferase of Pseudomonas syringae pv. syringae (strain B728a).